A 148-amino-acid polypeptide reads, in one-letter code: Methylated-DNA--protein-cysteine methyltransferase (148 aa).

Cysteine 90 (nucleophile; methyl group acceptor) is an active-site residue.

Belongs to the MGMT family.

The protein resides in the cytoplasm. The enzyme catalyses a 6-O-methyl-2'-deoxyguanosine in DNA + L-cysteinyl-[protein] = S-methyl-L-cysteinyl-[protein] + a 2'-deoxyguanosine in DNA. The catalysed reaction is a 4-O-methyl-thymidine in DNA + L-cysteinyl-[protein] = a thymidine in DNA + S-methyl-L-cysteinyl-[protein]. Involved in the cellular defense against the biological effects of O6-methylguanine (O6-MeG) and O4-methylthymine (O4-MeT) in DNA. Repairs the methylated nucleobase in DNA by stoichiometrically transferring the methyl group to a cysteine residue in the enzyme. This is a suicide reaction: the enzyme is irreversibly inactivated. The sequence is that of Methylated-DNA--protein-cysteine methyltransferase (ogt) from Pyrobaculum aerophilum (strain ATCC 51768 / DSM 7523 / JCM 9630 / CIP 104966 / NBRC 100827 / IM2).